Reading from the N-terminus, the 274-residue chain is Diaminopimelate epimerase (274 aa).

Substrate-binding residues include N11, Q44, and N64. The active-site Proton donor is C73. Substrate contacts are provided by residues 74–75 (GN), N157, N190, and 208–209 (ER). The active-site Proton acceptor is C217. 218–219 (GS) provides a ligand contact to substrate.

The protein belongs to the diaminopimelate epimerase family. As to quaternary structure, homodimer.

It localises to the cytoplasm. The catalysed reaction is (2S,6S)-2,6-diaminopimelate = meso-2,6-diaminopimelate. It participates in amino-acid biosynthesis; L-lysine biosynthesis via DAP pathway; DL-2,6-diaminopimelate from LL-2,6-diaminopimelate: step 1/1. In terms of biological role, catalyzes the stereoinversion of LL-2,6-diaminopimelate (L,L-DAP) to meso-diaminopimelate (meso-DAP), a precursor of L-lysine and an essential component of the bacterial peptidoglycan. In Actinobacillus succinogenes (strain ATCC 55618 / DSM 22257 / CCUG 43843 / 130Z), this protein is Diaminopimelate epimerase.